We begin with the raw amino-acid sequence, 368 residues long: Histidinol-phosphate aminotransferase (368 aa).

Lys215 carries the N6-(pyridoxal phosphate)lysine modification.

Belongs to the class-II pyridoxal-phosphate-dependent aminotransferase family. Histidinol-phosphate aminotransferase subfamily. As to quaternary structure, homodimer. Requires pyridoxal 5'-phosphate as cofactor.

The catalysed reaction is L-histidinol phosphate + 2-oxoglutarate = 3-(imidazol-4-yl)-2-oxopropyl phosphate + L-glutamate. Its pathway is amino-acid biosynthesis; L-histidine biosynthesis; L-histidine from 5-phospho-alpha-D-ribose 1-diphosphate: step 7/9. In Buchnera aphidicola subsp. Acyrthosiphon pisum (strain 5A), this protein is Histidinol-phosphate aminotransferase.